The sequence spans 296 residues: N-acetylmuramic acid 6-phosphate etherase (296 aa).

The SIS domain maps to 54–217 (VISCFQKGGR…STASMVGIGK (164 aa)). The Proton donor role is filled by E82. E113 is a catalytic residue.

This sequence belongs to the GCKR-like family. MurNAc-6-P etherase subfamily. As to quaternary structure, homodimer.

The enzyme catalyses N-acetyl-D-muramate 6-phosphate + H2O = N-acetyl-D-glucosamine 6-phosphate + (R)-lactate. Its pathway is amino-sugar metabolism; N-acetylmuramate degradation. Its function is as follows. Specifically catalyzes the cleavage of the D-lactyl ether substituent of MurNAc 6-phosphate, producing GlcNAc 6-phosphate and D-lactate. The polypeptide is N-acetylmuramic acid 6-phosphate etherase (Listeria monocytogenes serotype 4b (strain CLIP80459)).